A 471-amino-acid chain; its full sequence is Cell division protein FtsP (471 aa).

Positions 1-27 form a signal peptide, tat-type signal; sequence MSLNRRQFIQASGLALCAGMTPLAAKA. The Plastocyanin-like domain occupies 229–287; the sequence is VRLRLLNASNSRRYVMRLSDGRAMNVIASDQGLLPAPMAVNQLSLAPGERREILIDMSQ.

This sequence belongs to the FtsP family. In terms of processing, predicted to be exported by the Tat system. The position of the signal peptide cleavage has not been experimentally proven.

The protein localises to the periplasm. Its function is as follows. Cell division protein that is required for growth during stress conditions. May be involved in protecting or stabilizing the divisomal assembly under conditions of stress. The polypeptide is Cell division protein FtsP (Pectobacterium atrosepticum (strain SCRI 1043 / ATCC BAA-672) (Erwinia carotovora subsp. atroseptica)).